The sequence spans 494 residues: Glycosyl hydrolase family 109 protein (494 aa).

The tract at residues 1 to 32 (MNDDARPAPEPQDIPPHSGAADEVNRQDPSRR) is disordered. The segment at residues 1–58 (MNDDARPAPEPQDIPPHSGAADEVNRQDPSRRSVLWTTAGVAGAGLGLGALGAGTASA) is a signal peptide (tat-type signal). Residues 104–105 (NR), D126, 175–178 (WELH), 195–196 (EC), and N224 each bind NAD(+). Substrate contacts are provided by residues Y253, R272, 284-287 (YPNH), and Y366. An NAD(+)-binding site is contributed by Y284.

It belongs to the Gfo/Idh/MocA family. Glycosyl hydrolase 109 subfamily. Requires NAD(+) as cofactor. In terms of processing, predicted to be exported by the Tat system. The position of the signal peptide cleavage has not been experimentally proven.

Functionally, glycosidase. In Streptomyces filamentosus (Streptomyces roseosporus), this protein is Glycosyl hydrolase family 109 protein.